A 215-amino-acid polypeptide reads, in one-letter code: Eukaryotic translation initiation factor 4E (215 aa).

A disordered region spans residues 1–27; it reads MAERDSEPRVNIIRPDDEPEVEEERVP. S207 carries the post-translational modification Phosphoserine; by PKC.

This sequence belongs to the eukaryotic initiation factor 4E family. In terms of assembly, eIF4F is a multi-subunit complex, the composition of which varies with external and internal environmental conditions. It is composed of at least eIF4A, eIF4E and eIF4G. eIF4E is also known to interact with other partners. Phosphorylation increases the ability of the protein to bind to mRNA caps and to form the eIF4F complex.

Functionally, recognizes and binds the 7-methylguanosine-containing mRNA cap during an early step in the initiation of protein synthesis and facilitates ribosome binding by inducing the unwinding of the mRNAs secondary structures. The sequence is that of Eukaryotic translation initiation factor 4E from Aplysia californica (California sea hare).